The sequence spans 361 residues: Divinyl chlorophyll a/b light-harvesting protein PcbD (361 aa).

Transmembrane regions (helical) follow at residues 27-47 (FIAS…GSTL), 93-113 (IVHL…GILF), 140-160 (FILG…VEWA), 201-221 (VMGG…FHIV), 248-268 (AVLS…AFWC), and 315-335 (LTNV…WHAL).

It belongs to the PsbB/PsbC family. IsiA/Pcb subfamily. In terms of assembly, the antenna complex consists of divinyl chlorophylls (a and b) and divinyl chlorophyll a/b binding proteins and binds more divinyl chlorophyll b than does the antenna complex from high-light-adapted Prochlorococcus. Divinyl chlorophyll a serves as cofactor. Requires divinyl chlorophyll b as cofactor.

It is found in the cellular thylakoid membrane. The antenna complex functions as a light receptor, it captures and delivers excitation energy to photosystems II and I. The Prochlorales pcb genes are not related to higher plant LHCs. The sequence is that of Divinyl chlorophyll a/b light-harvesting protein PcbD (pcbD) from Prochlorococcus marinus (strain SARG / CCMP1375 / SS120).